A 225-amino-acid chain; its full sequence is Leucyl/phenylalanyl-tRNA--protein transferase (225 aa).

Belongs to the L/F-transferase family.

The protein resides in the cytoplasm. It carries out the reaction N-terminal L-lysyl-[protein] + L-leucyl-tRNA(Leu) = N-terminal L-leucyl-L-lysyl-[protein] + tRNA(Leu) + H(+). The enzyme catalyses N-terminal L-arginyl-[protein] + L-leucyl-tRNA(Leu) = N-terminal L-leucyl-L-arginyl-[protein] + tRNA(Leu) + H(+). The catalysed reaction is L-phenylalanyl-tRNA(Phe) + an N-terminal L-alpha-aminoacyl-[protein] = an N-terminal L-phenylalanyl-L-alpha-aminoacyl-[protein] + tRNA(Phe). Its function is as follows. Functions in the N-end rule pathway of protein degradation where it conjugates Leu, Phe and, less efficiently, Met from aminoacyl-tRNAs to the N-termini of proteins containing an N-terminal arginine or lysine. This is Leucyl/phenylalanyl-tRNA--protein transferase from Gluconobacter oxydans (strain 621H) (Gluconobacter suboxydans).